Reading from the N-terminus, the 181-residue chain is Adenylate kinase (181 aa).

An ATP-binding site is contributed by 10 to 15 (GAGKGT). An NMP region spans residues 30 to 59 (STGELFRKNIQDGTKLGIEAKRYLDAGDLV). AMP is bound by residues Thr31, Arg36, 57 to 59 (DLV), 85 to 88 (GYPR), and Gln92. The LID stretch occupies residues 126–132 (GRGRADD). Residue Arg127 coordinates ATP. AMP contacts are provided by Arg129 and Arg140. Residue Gly166 coordinates ATP.

Belongs to the adenylate kinase family. Monomer.

The protein resides in the cytoplasm. The enzyme catalyses AMP + ATP = 2 ADP. It functions in the pathway purine metabolism; AMP biosynthesis via salvage pathway; AMP from ADP: step 1/1. Catalyzes the reversible transfer of the terminal phosphate group between ATP and AMP. Plays an important role in cellular energy homeostasis and in adenine nucleotide metabolism. The sequence is that of Adenylate kinase from Mycobacterium marinum (strain ATCC BAA-535 / M).